The primary structure comprises 361 residues: Chorismate synthase (361 aa).

The span at D40–R49 shows a compositional bias: basic and acidic residues. The interval D40 to R60 is disordered. Residues R48 and R54 each coordinate NADP(+). FMN is bound by residues R125 to S127, N237 to A238, G277, K292 to S296, and R318.

This sequence belongs to the chorismate synthase family. Homotetramer. FMNH2 is required as a cofactor.

It catalyses the reaction 5-O-(1-carboxyvinyl)-3-phosphoshikimate = chorismate + phosphate. It functions in the pathway metabolic intermediate biosynthesis; chorismate biosynthesis; chorismate from D-erythrose 4-phosphate and phosphoenolpyruvate: step 7/7. Catalyzes the anti-1,4-elimination of the C-3 phosphate and the C-6 proR hydrogen from 5-enolpyruvylshikimate-3-phosphate (EPSP) to yield chorismate, which is the branch point compound that serves as the starting substrate for the three terminal pathways of aromatic amino acid biosynthesis. This reaction introduces a second double bond into the aromatic ring system. This is Chorismate synthase from Chromohalobacter salexigens (strain ATCC BAA-138 / DSM 3043 / CIP 106854 / NCIMB 13768 / 1H11).